The primary structure comprises 648 residues: DNA ligase (648 aa).

NAD(+) contacts are provided by residues Asp-63 to Asp-67 and Ser-105 to Thr-106. The N6-AMP-lysine intermediate role is filled by Lys-143. Arg-159, Glu-190, and Lys-302 together coordinate NAD(+). Positions 390, 393, 406, and 412 each coordinate Zn(2+). One can recognise a BRCT domain in the interval Ser-570–Ser-648.

Belongs to the NAD-dependent DNA ligase family. LigA subfamily. Requires Mg(2+) as cofactor. It depends on Mn(2+) as a cofactor.

The catalysed reaction is NAD(+) + (deoxyribonucleotide)n-3'-hydroxyl + 5'-phospho-(deoxyribonucleotide)m = (deoxyribonucleotide)n+m + AMP + beta-nicotinamide D-nucleotide.. DNA ligase that catalyzes the formation of phosphodiester linkages between 5'-phosphoryl and 3'-hydroxyl groups in double-stranded DNA using NAD as a coenzyme and as the energy source for the reaction. It is essential for DNA replication and repair of damaged DNA. In Shewanella baltica (strain OS155 / ATCC BAA-1091), this protein is DNA ligase.